A 968-amino-acid chain; its full sequence is Breast cancer anti-estrogen resistance protein 1 (968 aa).

An N-acetylmethionine modification is found at Met-1. Residues 97–159 enclose the SH3 domain; sequence DKNVLAKALY…PGNRLKILVG (63 aa). The tract at residues 164–277 is disordered; that stretch reads KPAAPGPGPP…GPGSPAQDIY (114 aa). The segment covering 167-182 has biased composition (pro residues); the sequence is APGPGPPATPPQPQPS. Positions 213-514 are substrate for kinases; sequence YLVPTPSKTQ…DGVYAVPPPA (302 aa). A Phosphotyrosine; by SRC modification is found at Tyr-226. Residues 233–249 are compositionally biased toward polar residues; the sequence is PQFQSPPAKQTSTFSKQ. Ser-237 carries the post-translational modification Phosphoserine. Tyr-332 carries the phosphotyrosine modification. Residue Tyr-347 is modified to Phosphotyrosine; by ABL1. Residue Thr-367 is modified to Phosphothreonine. Residue Ser-390 is modified to Phosphoserine. Positions 393–416 are disordered; that stretch reads KGLPPSNHHSVYDVPPSVSKDVPD. A phosphotyrosine mark is found at Tyr-460, Tyr-470, and Tyr-508. Disordered stretches follow at residues 503-544 and 705-756; these read IDDG…SLEV and RTKA…NSEG. The segment covering 514–524 has biased composition (basic and acidic residues); sequence AEREAPTDGKR. The segment covering 525–542 has biased composition (low complexity); the sequence is LSASSTGSTRSSQSASSL. Ser-526, Ser-535, and Ser-737 each carry phosphoserine. Positions 715-753 are enriched in polar residues; sequence GSSSLHLNPTDKASSIQSRPLPSPPKFTSQDSPDGQYEN. The SH3-binding signature appears at 733–741; that stretch reads RPLPSPPKF. The tract at residues 844-894 is divergent helix-loop-helix motif; sequence FYLEQCEANLTTLTDAVDAFFTAVATNQPPKIFVAHSKFVILSAHKLVFIG.

It belongs to the CAS family. Forms complexes in vivo with PTK2/FAK1, adapter protein CRKL and LYN kinase. Can heterodimerize with NEDD9. Component of a complex comprised of SH2D3C, BCAR1/CAS, and CRK. Within the complex, interacts with SH2D3C (via C-terminus), and CRK. Part of a complex comprised of PTPRA, BCAR1, BCAR3 (via SH2 domain) and SRC; the formation of the complex is dependent on integrin mediated-tyrosine phosphorylation of PTPRA. Interacts with BCAR3 (via Ras-GEF domain); the interaction regulates adhesion-dependent serine phosphorylation. Interacts with SMAD2 and SMAD3. Interacts with NPHP1. Interacts with PTK2B/PYK2. Interacts (via C-terminus) with SH2D3C/CHAT isoform 2 (via C-terminus). Interacts with activated CSPG4. Interacts with BMX, INPPL1/SHIP2 and PEAK1. Part of a collagen stimulated complex involved in cell migration composed of CDC42, CRK, TNK2 and BCAR1/p130cas. Interacts with TNK2 via SH3 domains. Interacts with PTK2B/PYK2. Interacts (when tyrosine-phosphorylated) with tensin TNS1; the interaction is increased by phosphorylation of TNS1. Post-translationally, PTK2/FAK1 activation mediates phosphorylation at the YDYVHL motif; phosphorylation is most likely catalyzed by SRC family members. SRC-family kinases are recruited to the phosphorylated sites and can phosphorylate other tyrosine residues. Tyrosine phosphorylation is triggered by integrin mediated adhesion of cells to the extracellular matrix. Phosphorylated by SRC kinase in a EDN1- and PTK2B-mediated manner; phosphorylation strengthens its interaction with BCAR3 as part of the PTK2B/BCAR1/BCAR3/RAP1 signaling pathway. In terms of processing, dephosphorylated by PTPN14 at Tyr-226. Widely expressed. Higher expression in lung, intestine and testis.

Its subcellular location is the cell junction. The protein localises to the focal adhesion. The protein resides in the cytoplasm. It is found in the cell projection. It localises to the axon. Functionally, docking protein which plays a central coordinating role for tyrosine-kinase-based signaling related to cell adhesion. Implicated in induction of cell migration and cell branching. Involved in the BCAR3-mediated inhibition of TGFB signaling. The sequence is that of Breast cancer anti-estrogen resistance protein 1 (Bcar1) from Rattus norvegicus (Rat).